The following is a 524-amino-acid chain: General transcription factor IIF subunit 1 (524 aa).

2 disordered regions span residues 56-76 (MYQE…RKQR) and 181-462 (RLKD…IQLT). A compositionally biased stretch (basic residues) spans 242–257 (KPQKKVPAKGGKKKKR). Residues 262-289 (EALEDSDDGDFEGQEVDYMSDESSSDEE) are compositionally biased toward acidic residues. Over residues 290–307 (LPGKIKPAKEEEGPKGLD) the composition is skewed to basic and acidic residues. Composition is skewed to acidic residues over residues 308-327 (EQSE…EEGE) and 347-358 (SDESETSEDSDI). Basic residues predominate over residues 368–378 (QKKKTPPKKDK). The segment covering 381–397 (GSNSSSRGNSRPGTPSP) has biased composition (low complexity). Polar residues predominate over residues 436–459 (PQNTSGKSTPQPQSGKSTPSSGDI).

It belongs to the TFIIF alpha subunit family. Heterodimer of an alpha and a beta subunit. Post-translationally, phosphorylated on Ser and other residues by TAF1 and casein kinase II-like kinases.

The protein resides in the nucleus. Functionally, TFIIF is a general transcription initiation factor that binds to RNA polymerase II and helps to recruit it to the initiation complex in collaboration with TFIIB. It promotes transcription elongation. The protein is General transcription factor IIF subunit 1 (gtf2f1) of Xenopus laevis (African clawed frog).